An 88-amino-acid chain; its full sequence is Cell division topological specificity factor (88 aa).

It belongs to the MinE family.

In terms of biological role, prevents the cell division inhibition by proteins MinC and MinD at internal division sites while permitting inhibition at polar sites. This ensures cell division at the proper site by restricting the formation of a division septum at the midpoint of the long axis of the cell. In Citrobacter koseri (strain ATCC BAA-895 / CDC 4225-83 / SGSC4696), this protein is Cell division topological specificity factor.